The following is a 1580-amino-acid chain: Dynamin-binding protein (1580 aa).

Met1 bears the N-acetylmethionine mark. 3 SH3 domains span residues 2–61 (EPGS…IVTI), 66–127 (EGER…ELCL), and 146–205 (YSLG…LLGP). 4 disordered regions span residues 211 to 245 (ESVNSRSGDDSAVNGEVDVPPEEAESGGDEDDQQS), 304 to 446 (NRTE…LVPL), 500 to 546 (YAQK…DSLD), and 589 to 688 (RGSS…AQTF). Acidic residues predominate over residues 229-243 (VPPEEAESGGDEDDQ). One can recognise an SH3 4 domain in the interval 244 to 303 (QSGTYGIALYRFQALETNELDFEVGDRIQILGTLEDGWLEGCLKGKTGVFPHRFVKLCPS). Composition is skewed to polar residues over residues 422–439 (QKSQHYLTAGGSHQTSDP) and 502–513 (QKHQTSTENTAS). A compositionally biased stretch (basic and acidic residues) spans 516-527 (DPPERPERRPGL). The segment covering 608-617 (RPPPPRPRTP) has biased composition (pro residues). Residues 671–682 (APEKEDSEHMEK) show a composition bias toward basic and acidic residues. Ser683 carries the post-translational modification Phosphoserine. A coiled-coil region spans residues 694–755 (LARIRDVEQD…LELQQLRDMT (62 aa)). Positions 783–970 (KRAKVVAELL…KEINVNINEY (188 aa)) constitute a DH domain. Positions 1011 to 1220 (LKHLTGFAPQ…LKATDREGNL (210 aa)) constitute a BAR domain. The SH3 5 domain maps to 1288–1351 (PPEKLFHVQR…YSSFLKPYNP (64 aa)). Residues 1356-1365 (SDASVASHSS) show a composition bias toward low complexity. 2 disordered regions span residues 1356-1384 (SDASVASHSSTESEHSGSSPGCHRQNSHS) and 1426-1514 (TGHP…GSSE). Over residues 1426–1440 (TGHPETGPSTCSSDP) the composition is skewed to polar residues. An SH3 6 domain is found at 1516-1579 (EGNQVYFAIY…PSNYIRKTEY (64 aa)).

In terms of assembly, binds DNM1 via its N-terminal SH3 domains. The C-terminal SH3 domain binds a complex containing actin, tubulin, Hsp70 and actin-regulatory proteins, such as ENAH, EVL, WIRE, CR16, WAVE1 and NAP1L1. Interacts with FASLG. Interacts (via SH3 domain 6) with WASL. Interacts (via SH3 domain 6) interacts with ENAH. Interacts (via C-terminal domain) with TJP1; required for the apical cell-cell junction localization of DNMBP.

Its subcellular location is the cytoplasm. The protein resides in the golgi apparatus. The protein localises to the golgi stack. It localises to the cytoskeleton. It is found in the synapse. Its subcellular location is the cell junction. Plays a critical role as a guanine nucleotide exchange factor (GEF) for CDC42 in several intracellular processes associated with the actin and microtubule cytoskeleton. Regulates the structure of apical junctions in epithelial cells. Participates in the normal lumenogenesis of epithelial cell cysts by regulating spindle orientation. Plays a role in ciliogenesis. May play a role in membrane trafficking between the cell surface and the Golgi. This chain is Dynamin-binding protein, found in Mus musculus (Mouse).